A 368-amino-acid chain; its full sequence is WD repeat-containing protein wdr-5.1 (368 aa).

Residues 1–64 (MDPAQNQPNT…APTTSQESTI (64 aa)) form a disordered region. Residues 16 to 42 (PAVEEAQGVNNSEAEAPAPAALSSVSP) show a composition bias toward low complexity. 7 WD repeats span residues 77-116 (GHTK…CERT), 119-158 (GHKL…MAKT), 161-200 (GHTN…CVKT), 203-242 (AHSD…CVKT), 246-285 (DENP…TLKQ), 288-330 (GHEN…VVQS), and 333-368 (GHTQ…RSDS).

In Caenorhabditis briggsae, this protein is WD repeat-containing protein wdr-5.1.